The chain runs to 123 residues: Small ribosomal subunit protein uS12 (123 aa).

3-methylthioaspartic acid is present on Asp-89. The disordered stretch occupies residues 104–123; the sequence is TAGVKDRKQARSKYGAKRPK. The segment covering 113 to 123 has biased composition (basic residues); that stretch reads ARSKYGAKRPK.

The protein belongs to the universal ribosomal protein uS12 family. In terms of assembly, part of the 30S ribosomal subunit. Contacts proteins S8 and S17. May interact with IF1 in the 30S initiation complex.

Functionally, with S4 and S5 plays an important role in translational accuracy. Interacts with and stabilizes bases of the 16S rRNA that are involved in tRNA selection in the A site and with the mRNA backbone. Located at the interface of the 30S and 50S subunits, it traverses the body of the 30S subunit contacting proteins on the other side and probably holding the rRNA structure together. The combined cluster of proteins S8, S12 and S17 appears to hold together the shoulder and platform of the 30S subunit. This is Small ribosomal subunit protein uS12 from Chromobacterium violaceum (strain ATCC 12472 / DSM 30191 / JCM 1249 / CCUG 213 / NBRC 12614 / NCIMB 9131 / NCTC 9757 / MK).